The sequence spans 185 residues: Inner membrane-spanning protein YciB (185 aa).

Transmembrane regions (helical) follow at residues Ile19–Trp39, Thr49–His69, Thr72–Thr92, Gly122–Phe142, and Phe150–Ile170.

The protein belongs to the YciB family.

The protein localises to the cell inner membrane. Plays a role in cell envelope biogenesis, maintenance of cell envelope integrity and membrane homeostasis. The chain is Inner membrane-spanning protein YciB from Acidithiobacillus ferrooxidans (strain ATCC 23270 / DSM 14882 / CIP 104768 / NCIMB 8455) (Ferrobacillus ferrooxidans (strain ATCC 23270)).